Consider the following 29-residue polypeptide: Prolamin alpha-1 (29 aa).

The polypeptide is Prolamin alpha-1 (Dactylis glomerata (Orchard grass)).